Here is a 158-residue protein sequence, read N- to C-terminus: ATP synthase subunit delta (158 aa).

The protein belongs to the ATPase delta chain family. As to quaternary structure, F-type ATPases have 2 components, F(1) - the catalytic core - and F(0) - the membrane proton channel. F(1) has five subunits: alpha(3), beta(3), gamma(1), delta(1), epsilon(1). F(0) has three main subunits: a(1), b(2) and c(10-14). The alpha and beta chains form an alternating ring which encloses part of the gamma chain. F(1) is attached to F(0) by a central stalk formed by the gamma and epsilon chains, while a peripheral stalk is formed by the delta and b chains.

The protein localises to the cell membrane. F(1)F(0) ATP synthase produces ATP from ADP in the presence of a proton or sodium gradient. F-type ATPases consist of two structural domains, F(1) containing the extramembraneous catalytic core and F(0) containing the membrane proton channel, linked together by a central stalk and a peripheral stalk. During catalysis, ATP synthesis in the catalytic domain of F(1) is coupled via a rotary mechanism of the central stalk subunits to proton translocation. Functionally, this protein is part of the stalk that links CF(0) to CF(1). It either transmits conformational changes from CF(0) to CF(1) or is implicated in proton conduction. This chain is ATP synthase subunit delta, found in Roseiflexus castenholzii (strain DSM 13941 / HLO8).